We begin with the raw amino-acid sequence, 203 residues long: Recombination protein RecR (203 aa).

Residues 56 to 71 (CSVCGNVSDEERCRIC) form a C4-type zinc finger. Residues 79–179 (SLVCVVEEPK…TVTRIASGLP (101 aa)) form the Toprim domain.

The protein belongs to the RecR family.

Functionally, may play a role in DNA repair. It seems to be involved in an RecBC-independent recombinational process of DNA repair. It may act with RecF and RecO. This chain is Recombination protein RecR, found in Mycolicibacterium smegmatis (strain ATCC 700084 / mc(2)155) (Mycobacterium smegmatis).